A 538-amino-acid chain; its full sequence is Nicotinate phosphoribosyltransferase (538 aa).

Positions 21 and 210 each coordinate nicotinate. Histidine 213 is subject to Phosphohistidine. Arginine 318 is a nicotinate binding site. Threonine 380 serves as a coordination point for 5-phospho-alpha-D-ribose 1-diphosphate. A Phosphoserine modification is found at serine 537.

It belongs to the NAPRTase family. Homodimer. Requires Mg(2+) as cofactor. It depends on Mn(2+) as a cofactor. Post-translationally, transiently phosphorylated on a His residue during the reaction cycle. Phosphorylation strongly increases the affinity for substrates and increases the rate of nicotinate D-ribonucleotide production. Dephosphorylation regenerates the low-affinity form of the enzyme, leading to product release.

Its subcellular location is the cytoplasm. It localises to the cytosol. It carries out the reaction nicotinate + 5-phospho-alpha-D-ribose 1-diphosphate + ATP + H2O = nicotinate beta-D-ribonucleotide + ADP + phosphate + diphosphate. It functions in the pathway cofactor biosynthesis; NAD(+) biosynthesis; nicotinate D-ribonucleotide from nicotinate: step 1/1. Its function is as follows. Catalyzes the first step in the biosynthesis of NAD from nicotinic acid, the ATP-dependent synthesis of beta-nicotinate D-ribonucleotide from nicotinate and 5-phospho-D-ribose 1-phosphate. Helps prevent cellular oxidative stress via its role in NAD biosynthesis. The chain is Nicotinate phosphoribosyltransferase (NAPRT) from Homo sapiens (Human).